The primary structure comprises 466 residues: RUS family member 1 (466 aa).

Ala-2 bears the N-acetylalanine mark. A helical membrane pass occupies residues 245 to 265; the sequence is LLMLPLVSDCLSLSLGCFILL.

Belongs to the RUS1 family.

The protein resides in the membrane. This Rattus norvegicus (Rat) protein is RUS family member 1 (Rusf1).